A 601-amino-acid polypeptide reads, in one-letter code: Elongation factor 4 (601 aa).

A tr-type G domain is found at 7 to 189 (ELIRNFSIIA…ALVTRLPPPK (183 aa)). Residues 19 to 24 (DHGKST) and 136 to 139 (NKID) each bind GTP.

It belongs to the TRAFAC class translation factor GTPase superfamily. Classic translation factor GTPase family. LepA subfamily.

It localises to the cell inner membrane. It catalyses the reaction GTP + H2O = GDP + phosphate + H(+). Its function is as follows. Required for accurate and efficient protein synthesis under certain stress conditions. May act as a fidelity factor of the translation reaction, by catalyzing a one-codon backward translocation of tRNAs on improperly translocated ribosomes. Back-translocation proceeds from a post-translocation (POST) complex to a pre-translocation (PRE) complex, thus giving elongation factor G a second chance to translocate the tRNAs correctly. Binds to ribosomes in a GTP-dependent manner. The chain is Elongation factor 4 from Acidiphilium cryptum (strain JF-5).